The primary structure comprises 735 residues: Protein-associating with the carboxyl-terminal domain of ezrin (735 aa).

The N-myristoyl glycine moiety is linked to residue Gly-2. The Protein kinase domain maps to 2-245 (GSENSALKSY…LSTLLSHDFF (244 aa)). 4 HEAT repeats span residues 194 to 249 (FGAL…RNDF), 285 to 323 (LIAS…NAPG), 333 to 370 (LFQS…HFTQ), and 372 to 409 (QLKK…LLGP). Ser-439 carries the phosphoserine modification. 2 disordered regions span residues 505–545 (LSDV…ASIH) and 604–648 (VPLT…GLGL). Over residues 528 to 538 (WPDWSEPEEPE) the composition is skewed to acidic residues. The segment at 547–735 (WPREPCDVAE…EELAWEDNNW (189 aa)) is interaction with EZR. A Phosphoserine modification is found at Ser-701.

Belongs to the protein kinase superfamily. As to quaternary structure, interacts with EZR/VIL2 C-terminal domain. May be myristoylated; myristoylation may target it to Golgi compartment.

The protein localises to the cytoplasm. Its subcellular location is the golgi apparatus. The protein resides in the cell projection. It localises to the lamellipodium. May play a role in regulating cell adhesion/migration complexes in migrating cells. This chain is Protein-associating with the carboxyl-terminal domain of ezrin (Scyl3), found in Mus musculus (Mouse).